The chain runs to 498 residues: Phosphoethanolamine N-methyltransferase 1 (498 aa).

Gly-68, Arg-73, Asp-89, Asp-115, Val-116, and Asn-134 together coordinate S-adenosyl-L-homocysteine. Residues Ser-167, Ser-172, Gly-173, Arg-177, and Tyr-184 each contribute to the phosphocholine site. N-methylethanolamine phosphate is bound by residues Gln-253–Tyr-254 and Tyr-262. Tyr-262 lines the phosphocholine pocket. Residues Val-271, Ser-272, Gly-298, Asp-320, Asp-346, Cys-347, and Arg-363 each coordinate S-adenosyl-L-homocysteine. Phosphocholine-binding residues include Tyr-394, Tyr-408, Arg-412, Tyr-414, and Lys-480. Residues Tyr-394, Tyr-408, Arg-412–Tyr-414, and Lys-480 contribute to the N-methylethanolamine phosphate site.

This sequence belongs to the class I-like SAM-binding methyltransferase superfamily. PEAMT family.

It catalyses the reaction phosphoethanolamine + S-adenosyl-L-methionine = N-methylethanolamine phosphate + S-adenosyl-L-homocysteine + H(+). The enzyme catalyses N-methylethanolamine phosphate + S-adenosyl-L-methionine = N,N-dimethylethanolamine phosphate + S-adenosyl-L-homocysteine + H(+). It carries out the reaction N,N-dimethylethanolamine phosphate + S-adenosyl-L-methionine = phosphocholine + S-adenosyl-L-homocysteine + H(+). Its pathway is phospholipid metabolism; phosphatidylcholine biosynthesis; phosphocholine from phosphoethanolamine: step 1/1. Inhibited by phosphatidic acid. Involved in phosphocholine biosynthesis. Catalyzes the N-methylation of phosphoethanolamine, phosphomonomethylethanolamine and phosphodimethylethanolamine, the three methylation steps required to convert phosphoethanolamine to phosphocholine (PC). In Triticum aestivum (Wheat), this protein is Phosphoethanolamine N-methyltransferase 1.